The sequence spans 357 residues: MKVDPNKEKALAAVLSQIEKQFGKGSIMKLGEDRSMDVETISTGSLSLDVALGAGGLPMGRIVEIYGPESSGKTTLTLEVIAAAQREGKTCAFIDAEHALDPIYAKKLGVDIDNLLCSQPDTGEQALEICDALTRSGAVDVIIVDSVAALTPKAEIEGEIGDSHMGLAARMMSQAMRKLAGNLKQSNTLLIFINQIRMKIGVMFGNPETTTGGNALKFYASVRLDIRRTGAIKEGDEVVGNETRVKVVKNKVAAPFKQAEFQILYGQGINRTGELVDLGVAHKLIEKAGAWYSYKGDKIGQGRANAGKYLTENPAIAAEIDKTLRELLLSNPSALASSASDDDNVEGNIDLETGEVF.

67–74 (GPESSGKT) contacts ATP.

It belongs to the RecA family.

Its subcellular location is the cytoplasm. In terms of biological role, can catalyze the hydrolysis of ATP in the presence of single-stranded DNA, the ATP-dependent uptake of single-stranded DNA by duplex DNA, and the ATP-dependent hybridization of homologous single-stranded DNAs. It interacts with LexA causing its activation and leading to its autocatalytic cleavage. This chain is Protein RecA, found in Shewanella oneidensis (strain ATCC 700550 / JCM 31522 / CIP 106686 / LMG 19005 / NCIMB 14063 / MR-1).